A 199-amino-acid chain; its full sequence is MDMGNMGMGMGMGMDSGHNHSHMNMGSGHGADSGHACRISMLLNFNTVDACFLSPNWHIRSKGMFAGSIIGIFFLCVLIELIRRLGREFDRWLVKRAGVNSTCGELSSVAEYGKDGAQGGAVVRVAPRFRYVPSWPHQILRGFIYGSQFTAAFFVMLLGMYFNVIVLIFIFLGQTVGYMLFGRDTCGGGFDFGAQGRCC.

2 consecutive transmembrane segments (helical) span residues K62–I82 and A152–L172.

This sequence belongs to the copper transporter (Ctr) (TC 1.A.56) family. SLC31A subfamily.

The protein resides in the membrane. Its function is as follows. Required for high affinity copper (probably reduced Cu I) transport into the cell. Plays a role in fungal pathogenesis during host infection. This is Copper transport protein CTR4 from Cryptococcus neoformans var. grubii serotype A (strain H99 / ATCC 208821 / CBS 10515 / FGSC 9487) (Filobasidiella neoformans var. grubii).